The primary structure comprises 163 residues: Crossover junction endodeoxyribonuclease RuvC (163 aa).

Catalysis depends on residues D9, E76, and D148. D9, E76, and D148 together coordinate Mg(2+).

Belongs to the RuvC family. In terms of assembly, homodimer which binds Holliday junction (HJ) DNA. The HJ becomes 2-fold symmetrical on binding to RuvC with unstacked arms; it has a different conformation from HJ DNA in complex with RuvA. In the full resolvosome a probable DNA-RuvA(4)-RuvB(12)-RuvC(2) complex forms which resolves the HJ. Requires Mg(2+) as cofactor.

It localises to the cytoplasm. The enzyme catalyses Endonucleolytic cleavage at a junction such as a reciprocal single-stranded crossover between two homologous DNA duplexes (Holliday junction).. In terms of biological role, the RuvA-RuvB-RuvC complex processes Holliday junction (HJ) DNA during genetic recombination and DNA repair. Endonuclease that resolves HJ intermediates. Cleaves cruciform DNA by making single-stranded nicks across the HJ at symmetrical positions within the homologous arms, yielding a 5'-phosphate and a 3'-hydroxyl group; requires a central core of homology in the junction. The consensus cleavage sequence is 5'-(A/T)TT(C/G)-3'. Cleavage occurs on the 3'-side of the TT dinucleotide at the point of strand exchange. HJ branch migration catalyzed by RuvA-RuvB allows RuvC to scan DNA until it finds its consensus sequence, where it cleaves and resolves the cruciform DNA. The protein is Crossover junction endodeoxyribonuclease RuvC of Nostoc sp. (strain PCC 7120 / SAG 25.82 / UTEX 2576).